A 167-amino-acid polypeptide reads, in one-letter code: Protein tyrosine phosphatase type IVA 2 (167 aa).

In terms of domain architecture, Tyrosine-protein phosphatase spans 5–158; sequence APVEISYENM…YRPKMRLRFR (154 aa). Cysteines 46 and 101 form a disulfide. Asp69 serves as the catalytic Proton donor. The active-site Phosphocysteine intermediate is Cys101. 102-107 is a phosphate binding site; the sequence is VAGLGR. Arg107 provides a ligand contact to substrate. Cys164 bears the Cysteine methyl ester mark. Residue Cys164 is the site of S-farnesyl cysteine attachment. Residues 165 to 167 constitute a propeptide, removed in mature form; it reads CVQ.

The protein belongs to the protein-tyrosine phosphatase family. As to quaternary structure, in contrast to PTP4A1 and PTP4A3, does not interact with tubulin. Interacts with RABGGTB. In terms of processing, farnesylated. Farnesylation is required for membrane targeting and for interaction with RABGGTB. In terms of tissue distribution, expressed in skeletal muscle, and at lower levels in liver, lung, heart, kidney, brain, testis and spleen.

Its subcellular location is the cell membrane. It localises to the early endosome. The protein localises to the cytoplasm. It catalyses the reaction O-phospho-L-tyrosyl-[protein] + H2O = L-tyrosyl-[protein] + phosphate. Its activity is regulated as follows. Inhibited by sodium orthovanadate and pentamidine. In terms of biological role, protein tyrosine phosphatase which stimulates progression from G1 into S phase during mitosis. Inhibits geranylgeranyl transferase type II activity by blocking the association between RABGGTA and RABGGTB. In Mus musculus (Mouse), this protein is Protein tyrosine phosphatase type IVA 2 (Ptp4a2).